Reading from the N-terminus, the 419-residue chain is Ribosome biogenesis protein WDR12 homolog (419 aa).

Positions 10 to 91 (VQVHLKTKQE…EDAIDIEYVE (82 aa)) are ubiquitin-like (UBL) domain. WD repeat units follow at residues 103-140 (LHDDWVSAVKACGKWILTGCYDNTINIWTNKGKHKLTI), 142-184 (GHTA…NAVE), 191-230 (GHERGVDSVCVSPDAQRFATGSWDTMLKIWSAGLDDTSEG), 249-287 (GHRESISAVQWMDATTLVTGSWDHTLKVWDLQLEGIKTE), 289-328 (STNKSIFDASYSKLNRLIVTASADKNLRLYDARTNQGSVV), 334-374 (GHNA…APLY), and 378-416 (GHGEKVLDIDWSNPKYIVSGGADNTVRVFKSGKATIENM).

It belongs to the WD repeat WDR12/YTM1 family.

The protein localises to the nucleus. The protein resides in the nucleolus. Its subcellular location is the nucleoplasm. Functionally, required for maturation of ribosomal RNAs and formation of the large ribosomal subunit. The protein is Ribosome biogenesis protein WDR12 homolog of Drosophila virilis (Fruit fly).